A 451-amino-acid chain; its full sequence is DNA-directed RNA polymerase subunit Rpo1C (451 aa).

The unknown stretch occupies residues 1–68 (MQDIIGKIED…DDDELLDAVE (68 aa)). The segment at 69–451 (DDYQRILKVQ…SVSVVMKERK (383 aa)) is DNA-directed RNA polymerase subunit Rpo1C.

The protein belongs to the RNA polymerase beta' chain family. Part of the RNA polymerase complex.

Its subcellular location is the cytoplasm. The catalysed reaction is RNA(n) + a ribonucleoside 5'-triphosphate = RNA(n+1) + diphosphate. In terms of biological role, DNA-dependent RNA polymerase (RNAP) catalyzes the transcription of DNA into RNA using the four ribonucleoside triphosphates as substrates. Forms part of the jaw domain. In Methanothermobacter thermautotrophicus (strain ATCC 29096 / DSM 1053 / JCM 10044 / NBRC 100330 / Delta H) (Methanobacterium thermoautotrophicum), this protein is DNA-directed RNA polymerase subunit Rpo1C.